A 195-amino-acid chain; its full sequence is Neurturin (195 aa).

The N-terminal stretch at 1–19 (MRRWKAAALVSLICSSLLS) is a signal peptide. Positions 20–95 (VWMCQEGLLL…RAGPRRRRAR (76 aa)) are excised as a propeptide. Intrachain disulfides connect Cys-101–Cys-163, Cys-128–Cys-192, and Cys-132–Cys-194. Positions 147, 156, and 158 each coordinate heparan sulfate group.

This sequence belongs to the TGF-beta family. GDNF subfamily. In terms of assembly, homodimer; disulfide-linked. Interacts with GFRA2 coreceptor and RET: forms a 2:2:2 ternary complex composed of NRTN ligand, GFRA2 and RET receptor. Also forms a 4:4:4 tetrameric complex composed of 4 copies of NRTN ligand, GFRA2 and RET receptor, which prevents endocytosis of RET. In terms of tissue distribution, widespread distribution.

Its subcellular location is the secreted. Functionally, growth factor that supports the survival of sympathetic neurons in culture. May regulate the development and maintenance of the CNS. Involved in the development of the neural crest. Might control the size of non-neuronal cell population such as haemopoietic cells. Acts by binding to its coreceptor, GFRA2, leading to autophosphorylation and activation of the RET receptor. Heparan sulfate-binding is required for signaling. The chain is Neurturin (Nrtn) from Mus musculus (Mouse).